A 371-amino-acid polypeptide reads, in one-letter code: Queuine tRNA-ribosyltransferase (371 aa).

Aspartate 93 serves as the catalytic Proton acceptor. Substrate-binding positions include 93-97 (DSGGF), aspartate 147, glutamine 191, and glycine 218. Residues 249–255 (GVGTVVD) are RNA binding. Aspartate 268 (nucleophile) is an active-site residue. The RNA binding; important for wobble base 34 recognition stretch occupies residues 273–277 (TRNAR). Cysteine 306, cysteine 308, cysteine 311, and histidine 337 together coordinate Zn(2+).

It belongs to the queuine tRNA-ribosyltransferase family. As to quaternary structure, homodimer. Within each dimer, one monomer is responsible for RNA recognition and catalysis, while the other monomer binds to the replacement base PreQ1. Zn(2+) serves as cofactor.

It carries out the reaction 7-aminomethyl-7-carbaguanine + guanosine(34) in tRNA = 7-aminomethyl-7-carbaguanosine(34) in tRNA + guanine. The protein operates within tRNA modification; tRNA-queuosine biosynthesis. Catalyzes the base-exchange of a guanine (G) residue with the queuine precursor 7-aminomethyl-7-deazaguanine (PreQ1) at position 34 (anticodon wobble position) in tRNAs with GU(N) anticodons (tRNA-Asp, -Asn, -His and -Tyr). Catalysis occurs through a double-displacement mechanism. The nucleophile active site attacks the C1' of nucleotide 34 to detach the guanine base from the RNA, forming a covalent enzyme-RNA intermediate. The proton acceptor active site deprotonates the incoming PreQ1, allowing a nucleophilic attack on the C1' of the ribose to form the product. After dissociation, two additional enzymatic reactions on the tRNA convert PreQ1 to queuine (Q), resulting in the hypermodified nucleoside queuosine (7-(((4,5-cis-dihydroxy-2-cyclopenten-1-yl)amino)methyl)-7-deazaguanosine). The chain is Queuine tRNA-ribosyltransferase from Leptospira biflexa serovar Patoc (strain Patoc 1 / Ames).